A 268-amino-acid chain; its full sequence is Tryptophan synthase alpha chain (268 aa).

Residues glutamate 49 and aspartate 60 each act as proton acceptor in the active site.

This sequence belongs to the TrpA family. Tetramer of two alpha and two beta chains.

The enzyme catalyses (1S,2R)-1-C-(indol-3-yl)glycerol 3-phosphate + L-serine = D-glyceraldehyde 3-phosphate + L-tryptophan + H2O. It functions in the pathway amino-acid biosynthesis; L-tryptophan biosynthesis; L-tryptophan from chorismate: step 5/5. The alpha subunit is responsible for the aldol cleavage of indoleglycerol phosphate to indole and glyceraldehyde 3-phosphate. The protein is Tryptophan synthase alpha chain of Aeromonas salmonicida (strain A449).